Consider the following 715-residue polypeptide: 1,4-alpha-glucan branching enzyme GlgB (715 aa).

The active-site Nucleophile is the Asp-399. The active-site Proton donor is the Glu-452.

The protein belongs to the glycosyl hydrolase 13 family. GlgB subfamily. In terms of assembly, monomer.

The enzyme catalyses Transfers a segment of a (1-&gt;4)-alpha-D-glucan chain to a primary hydroxy group in a similar glucan chain.. It participates in glycan biosynthesis; glycogen biosynthesis. Functionally, catalyzes the formation of the alpha-1,6-glucosidic linkages in glycogen by scission of a 1,4-alpha-linked oligosaccharide from growing alpha-1,4-glucan chains and the subsequent attachment of the oligosaccharide to the alpha-1,6 position. The protein is 1,4-alpha-glucan branching enzyme GlgB of Rhodopseudomonas palustris (strain BisA53).